A 390-amino-acid chain; its full sequence is Coenzyme A biosynthesis bifunctional protein CoaBC (390 aa).

A phosphopantothenoylcysteine decarboxylase region spans residues 1–188 (MDKNKHILIG…NQKDYLKNKK (188 aa)). The active-site Proton donor is C156. A phosphopantothenate--cysteine ligase region spans residues 189 to 390 (ILITASRTEE…VAKEILKILY (202 aa)). Residues D277, K287, 304–307 (PDII), F323, K338, and K342 contribute to the CTP site.

It in the N-terminal section; belongs to the HFCD (homo-oligomeric flavin containing Cys decarboxylase) superfamily. This sequence in the C-terminal section; belongs to the PPC synthetase family. Mg(2+) is required as a cofactor. It depends on FMN as a cofactor.

The enzyme catalyses N-[(R)-4-phosphopantothenoyl]-L-cysteine + H(+) = (R)-4'-phosphopantetheine + CO2. It catalyses the reaction (R)-4'-phosphopantothenate + L-cysteine + CTP = N-[(R)-4-phosphopantothenoyl]-L-cysteine + CMP + diphosphate + H(+). It functions in the pathway cofactor biosynthesis; coenzyme A biosynthesis; CoA from (R)-pantothenate: step 2/5. The protein operates within cofactor biosynthesis; coenzyme A biosynthesis; CoA from (R)-pantothenate: step 3/5. Its function is as follows. Catalyzes two sequential steps in the biosynthesis of coenzyme A. In the first step cysteine is conjugated to 4'-phosphopantothenate to form 4-phosphopantothenoylcysteine. In the second step the latter compound is decarboxylated to form 4'-phosphopantotheine. This Borreliella burgdorferi (strain ATCC 35210 / DSM 4680 / CIP 102532 / B31) (Borrelia burgdorferi) protein is Coenzyme A biosynthesis bifunctional protein CoaBC.